We begin with the raw amino-acid sequence, 399 residues long: Fructose-bisphosphate aldolase 1, chloroplastic (399 aa).

Residues 1–48 constitute a chloroplast transit peptide; that stretch reads MASSTATMLKASPVKSDWVKGQSLLLRQPSSVSAIRSHVAPSALTVRA. Arginine 96 contacts substrate. Serine 158 carries the phosphoserine modification. Lysine 186 lines the substrate pocket. Serine 216 is modified (phosphoserine). The active-site Proton acceptor is the glutamate 226. Lysine 268 serves as the catalytic Schiff-base intermediate with dihydroxyacetone-P. Position 310–312 (310–312) interacts with substrate; the sequence is SGG. At lysine 395 the chain carries N6,N6,N6-trimethyllysine.

Belongs to the class I fructose-bisphosphate aldolase family. As to quaternary structure, homotetramer. Can be trimethylated at Lys-395 by LSMT-L, but the trimethylation has no effect in vitro on the kinetic properties of the enzyme. In terms of processing, S-glutathionylated. Highly expressed in rosettes leaves and cauline leaves.

It localises to the plastid. The protein resides in the chloroplast. It is found in the plastoglobule. The protein localises to the chloroplast stroma. The catalysed reaction is beta-D-fructose 1,6-bisphosphate = D-glyceraldehyde 3-phosphate + dihydroxyacetone phosphate. It functions in the pathway carbohydrate degradation; glycolysis; D-glyceraldehyde 3-phosphate and glycerone phosphate from D-glucose: step 4/4. Its function is as follows. Plays a key role in glycolysis and gluconeogenesis. This is Fructose-bisphosphate aldolase 1, chloroplastic from Arabidopsis thaliana (Mouse-ear cress).